Consider the following 681-residue polypeptide: DNA ligase (681 aa).

Residues 45-49 (DFDFD), 94-95 (SL), and E120 each bind NAD(+). K122 (N6-AMP-lysine intermediate) is an active-site residue. 4 residues coordinate NAD(+): R143, E177, K289, and K313. Zn(2+) is bound by residues C403, C406, C421, and C426. Positions 593–681 (ADQQPFAGQS…SLKIDFKNLI (89 aa)) constitute a BRCT domain.

The protein belongs to the NAD-dependent DNA ligase family. LigA subfamily. Requires Mg(2+) as cofactor. It depends on Mn(2+) as a cofactor.

The catalysed reaction is NAD(+) + (deoxyribonucleotide)n-3'-hydroxyl + 5'-phospho-(deoxyribonucleotide)m = (deoxyribonucleotide)n+m + AMP + beta-nicotinamide D-nucleotide.. Its function is as follows. DNA ligase that catalyzes the formation of phosphodiester linkages between 5'-phosphoryl and 3'-hydroxyl groups in double-stranded DNA using NAD as a coenzyme and as the energy source for the reaction. It is essential for DNA replication and repair of damaged DNA. In Leptospira interrogans serogroup Icterohaemorrhagiae serovar copenhageni (strain Fiocruz L1-130), this protein is DNA ligase.